Here is a 629-residue protein sequence, read N- to C-terminus: MAVRLMKQCTCLLREATRLVPTVAPVGRLRLAGVACKTLTSSVSSPSSGSLTELLGKEQVFTPYPEHQEVDYLIEKATRPEELLELLGGDHSLHHNHAALILIRLSYLLSEKPKEKALLVEDARFQQLVRLVDSQITSVWHGTLVKLLRSLYTLVLPQGSKELRSVEQEVRWRLRRLKYKHLVFLAESCAPFMKEQHSKELLAELLRHLERRWTEISDSRTLVSMMTMAGHLSESLMNRLEDKCLELVEQFGPDELRKVLMTLAAQSRRSVPLLRAISYHLVQKPFPMTKGMLLDLAYAYGKLSFHQTQVAQRLAADLLPFIPSMTPGEVARCAKSFAFLKWLNLPLFEAFTQHLLNSAQDVSLSHLCSVLLAFARLNFHPEQEDQFFNLVHEKLDSVLGSLEPALQVDLVWALCVLQQVQVAELQTVLHPGLHTRFLESKSPKDQSTFQKLVHINSTALLEYPEYKGPFLPASAVAPSPSPSNKKMTPLQKELQDALKALLGNNDTGSLEVATQYGWVLDAEVLLDAEGHFLPLRDFVAPHLAQPVGNQPLPPGAKRIAFLRWEFPNFNSRSKDLLGRFVLARRHVLAAGFLVVDVPYYEWLDLKSEWQKTAYLKDKMRKAVAEELAK.

The 59-residue stretch at 559–617 (IAFLRWEFPNFNSRSKDLLGRFVLARRHVLAAGFLVVDVPYYEWLDLKSEWQKTAYLKD) folds into the RAP domain.

This sequence belongs to the FAST kinase family.

Its subcellular location is the mitochondrion matrix. In terms of biological role, plays a role in processing of mitochondrial RNA precursors and in stabilization of a subset of mature mitochondrial RNA species, such as MT-CO1, MT-CO2, MT-CYB, MT-CO3, MT-ND3, MT-ND5 and MT-ATP8/6. May play a role in cell cycle progression. The sequence is that of FAST kinase domain-containing protein 4 (Tbrg4) from Rattus norvegicus (Rat).